Here is a 391-residue protein sequence, read N- to C-terminus: Nucleosome assembly protein 1-like 1 (391 aa).

Basic and acidic residues predominate over residues 1–10 (MADIDNKEQS). A disordered region spans residues 1 to 32 (MADIDNKEQSELDQDLDDVEEVEEEETGEETK). Ala-2 bears the N-acetylalanine mark. Residue Ser-10 is modified to Phosphoserine. Residues 11–28 (ELDQDLDDVEEVEEEETG) show a composition bias toward acidic residues. 2 positions are modified to phosphothreonine: Thr-62 and Thr-64. Residue Ser-69 is modified to Phosphoserine. The residue at position 116 (Lys-116) is an N6-acetyllysine. Residues 125–150 (YEPTEEECEWKPDEEDEISEELKEKA) carry the NAP1L motif motif. The span at 132–143 (CEWKPDEEDEIS) shows a compositional bias: acidic residues. The segment at 132-163 (CEWKPDEEDEISEELKEKAKVEDEKKDEEKED) is disordered. Ser-143 carries the phosphoserine modification. Basic and acidic residues predominate over residues 144-163 (EELKEKAKVEDEKKDEEKED). The short motif at 273–279 (IKKKQKH) is the Nuclear localization signal element. The segment at 345–391 (EAIEDDDDDYDEEGEEADEEGEEEGDEENDPDYDPKKDQNPAECKQQ) is disordered. Residues 346–376 (AIEDDDDDYDEEGEEADEEGEEEGDEENDPD) show a composition bias toward acidic residues. 2 positions are modified to 5-glutamyl polyglycine: Glu-359 and Glu-360. Residues 377–391 (YDPKKDQNPAECKQQ) show a composition bias toward basic and acidic residues. Cys-388 bears the Cysteine methyl ester mark. Residue Cys-388 is the site of S-farnesyl cysteine attachment. Positions 389–391 (KQQ) are cleaved as a propeptide — removed in mature form.

It belongs to the nucleosome assembly protein (NAP) family. In terms of assembly, homodimer. The dimer binds strongly and sequentially to single and double H2A-H2B heterodimers. Interacts with ERCC6; this interaction increases ERCC6 processivity. Interacts with RAD54. Interacts with SETD1A. Post-translationally, polyglycylated by TTLL10 on glutamate residues, resulting in polyglycine chains on the gamma-carboxyl group. Both polyglutamylation and polyglycylation modifications can coexist on the same protein on adjacent residues, and lowering polyglycylation levels increases polyglutamylation, and reciprocally. Polyglutamylated by TTLL4 on glutamate residues, resulting in polyglutamate chains on the gamma-carboxyl group. Both polyglutamylation and polyglycylation modifications can coexist on the same protein on adjacent residues, and lowering polyglycylation levels increases polyglutamylation, and reciprocally.

It localises to the nucleus. The protein resides in the melanosome. It is found in the cytoplasm. Histone chaperone that plays a role in the nuclear import of H2A-H2B and nucleosome assembly. Also participates in several important DNA repair mechanisms: greatly enhances ERCC6-mediated chromatin remodeling which is essential for transcription-coupled nucleotide excision DNA repair. Also stimulates homologous recombination (HR) by RAD51 and RAD54 which is essential in mitotic DNA double strand break (DSB) repair. Plays a key role in the regulation of embryonic neurogenesis. Promotes the proliferation of neural progenitors and inhibits neuronal differentiation during cortical development. Regulates neurogenesis via the modulation of RASSF10; regulates RASSF10 expression by promoting SETD1A-mediated H3K4 methylation at the RASSF10 promoter. In Bos taurus (Bovine), this protein is Nucleosome assembly protein 1-like 1 (NAP1L1).